A 252-amino-acid chain; its full sequence is Ubiquinone/menaquinone biosynthesis C-methyltransferase UbiE (252 aa).

S-adenosyl-L-methionine-binding positions include T71, D100, 124-125 (DA), and S141.

Belongs to the class I-like SAM-binding methyltransferase superfamily. MenG/UbiE family.

It catalyses the reaction a 2-demethylmenaquinol + S-adenosyl-L-methionine = a menaquinol + S-adenosyl-L-homocysteine + H(+). The enzyme catalyses a 2-methoxy-6-(all-trans-polyprenyl)benzene-1,4-diol + S-adenosyl-L-methionine = a 5-methoxy-2-methyl-3-(all-trans-polyprenyl)benzene-1,4-diol + S-adenosyl-L-homocysteine + H(+). It participates in quinol/quinone metabolism; menaquinone biosynthesis; menaquinol from 1,4-dihydroxy-2-naphthoate: step 2/2. It functions in the pathway cofactor biosynthesis; ubiquinone biosynthesis. Its function is as follows. Methyltransferase required for the conversion of demethylmenaquinol (DMKH2) to menaquinol (MKH2) and the conversion of 2-polyprenyl-6-methoxy-1,4-benzoquinol (DDMQH2) to 2-polyprenyl-3-methyl-6-methoxy-1,4-benzoquinol (DMQH2). This is Ubiquinone/menaquinone biosynthesis C-methyltransferase UbiE from Caulobacter vibrioides (strain ATCC 19089 / CIP 103742 / CB 15) (Caulobacter crescentus).